The following is a 1196-amino-acid chain: Homeodomain-interacting protein kinase 2 (1196 aa).

Phosphoserine is present on serine 16. Residue lysine 32 forms a Glycyl lysine isopeptide (Lys-Gly) (interchain with G-Cter in SUMO); alternate linkage. Residue lysine 32 forms a Glycyl lysine isopeptide (Lys-Gly) (interchain with G-Cter in SUMO2); alternate linkage. The tract at residues valine 50–threonine 69 is disordered. Residues serine 97 to leucine 230 are transcriptional corepression. Phosphoserine is present on residues serine 118 and serine 135. At threonine 141 the chain carries Phosphothreonine. The tract at residues histidine 189–glutamate 520 is interaction with DAXX. Residues tyrosine 199–valine 527 form the Protein kinase domain. ATP is bound by residues leucine 205–valine 213 and lysine 228. 2 positions are modified to phosphothreonine: threonine 252 and threonine 273. Aspartate 324 acts as the Proton acceptor in catalysis. Residue tyrosine 361 is modified to Phosphotyrosine; by autocatalysis. At serine 441 the chain carries Phosphoserine. Phosphothreonine occurs at positions 482, 517, and 566. The tract at residues alanine 539–methionine 844 is interaction with SKI and SMAD1. The interaction with DAZAP2 stretch occupies residues serine 600–serine 800. Phosphoserine is present on residues serine 634 and serine 668. The residue at position 687 (threonine 687) is a Phosphothreonine. An interaction with POU4F1 region spans residues arginine 752–glutamate 897. The interval histidine 774–valine 876 is interaction with CTBP1. The tract at residues valine 787–glutamate 897 is interaction with HMGA1. Disordered stretches follow at residues arginine 792–serine 847 and serine 891–asparagine 963. The segment covering glutamine 793 to glutamine 829 has biased composition (polar residues). The Nuclear localization signal 1 (NLS1) motif lies at arginine 802–lysine 805. Serine 815 and serine 827 each carry phosphoserine. The Nuclear localization signal 2 (NLS2) motif lies at lysine 832–lysine 835. The interaction with TP53 and TP73 stretch occupies residues proline 839–serine 934. Positions glutamine 873 to threonine 907 are interaction with UBE2I. Residues glutamine 873 to leucine 980 are localization to nuclear speckles. The segment at glutamine 873–leucine 980 is required for localization to nuclear speckles. The interval threonine 884 to valine 908 is SUMO interaction motifs (SIM); required for nuclear localization and kinase activity. The span at aspartate 923–serine 937 shows a compositional bias: low complexity. Serine 934 is subject to Phosphoserine. Residues proline 935 to alanine 1050 form an interaction with AXIN1 region. Positions valine 938–aspartate 951 are enriched in polar residues. Residues lysine 953 and lysine 973 each participate in a glycyl lysine isopeptide (Lys-Gly) (interchain with G-Cter in SUMO2) cross-link. Residues aspartate 984–isoleucine 1196 are autoinhibitory domain (AID). Phosphoserine is present on residues serine 991, serine 993, serine 1042, serine 1153, and serine 1186. Residues serine 991–glutamine 1046 are compositionally biased toward low complexity. The tract at residues serine 991–arginine 1058 is disordered. A Glycyl lysine isopeptide (Lys-Gly) (interchain with G-Cter in SUMO) cross-link involves residue lysine 1189.

It belongs to the protein kinase superfamily. CMGC Ser/Thr protein kinase family. HIPK subfamily. Interacts with CREB1, SIAH1, WSB1, CBX4, TRADD, p53/TP53, TP73, TP63, CREBBP, DAXX, P53DINP1, SKI, SMAD1, SMAD2 and SMAD3, but not SMAD4. Interacts with SP100; positively regulates TP53-dependent transcription. Interacts with ATF1, PML, RUNX1, EP300, NKX1-2, NKX2-5, UBE2I, HMGA1, CTBP1, AXIN1, NLK, MYB, POU4F1, POU4F2, POU4F3, UBE2I, UBL1 and ZBTB4. Probably part of a complex consisting of p53/TP53, HIPK2 and AXIN1. Interacts with DAZAP2; the interaction results in phosphorylation of DAZAP2 which causes localization of DAZAP2 to the nucleus, reduces interaction of DAZAP2 with HIPK2 and prevents DAZAP2-dependent degradation of HIPK2. Interacts with SIAH1; the interaction is promoted by DAZAP2 and results in SIAH1-mediated ubiquitination and subsequent proteasomal degradation of HIPK2. In terms of assembly, interacts with SPN/CD43 cytoplasmic tail. Post-translationally, sumoylated. When conjugated it is directed to nuclear speckles. Desumoylated by SENP1. Sumoylation on Lys-32 is promoted by the E3 SUMO-protein ligase CBX4. Autophosphorylation at Tyr-361 in the activation loop activates the kinase and promotes nuclear localization. In terms of processing, ubiquitinated by FBXO3, WSB1 and SIAH1, leading to rapid proteasome-dependent degradation. The degradation mediated by FBXO3, but not ubiquitination, is prevented in the presence of PML. The degradation mediated by WSB1 and SIAH1 is reversibly reduced upon DNA damage. Post-translationally, cleaved at Asp-923 and Asp-984 by CASP6 in a p53/TP53-dependent manner. The cleaved form lacks the autoinhibitory C-terminal domain (AID), resulting in a hyperactive kinase, which potentiates p53/TP53 Ser-46 phosphorylation and subsequent activation of the cell death machinery. As to expression, ubiquitous. Abundant in muscle, heart, small intestine, stomach, kidney and brain; and low in testis, skin and lung.

The protein resides in the nucleus. Its subcellular location is the PML body. It is found in the cytoplasm. The enzyme catalyses L-seryl-[protein] + ATP = O-phospho-L-seryl-[protein] + ADP + H(+). The catalysed reaction is L-threonyl-[protein] + ATP = O-phospho-L-threonyl-[protein] + ADP + H(+). Serine/threonine-protein kinase involved in transcription regulation, p53/TP53-mediated cellular apoptosis and regulation of the cell cycle. Acts as a corepressor of several transcription factors, including SMAD1 and POU4F1/Brn3a and probably NK homeodomain transcription factors. Phosphorylates PDX1, ATF1, PML, p53/TP53, CREB1, CTBP1, CBX4, RUNX1, EP300, CTNNB1, HMGA1, ZBTB4 and DAZAP2. Inhibits cell growth and promotes apoptosis through the activation of p53/TP53 both at the transcription level and at the protein level (by phosphorylation and indirect acetylation). The phosphorylation of p53/TP53 may be mediated by a p53/TP53-HIPK2-AXIN1 complex. Involved in the response to hypoxia by acting as a transcriptional co-suppressor of HIF1A. Mediates transcriptional activation of TP73. In response to TGFB, cooperates with DAXX to activate JNK. Negative regulator through phosphorylation and subsequent proteasomal degradation of CTNNB1 and the antiapoptotic factor CTBP1. In the Wnt/beta-catenin signaling pathway acts as an intermediate kinase between MAP3K7/TAK1 and NLK to promote the proteasomal degradation of MYB. Phosphorylates CBX4 upon DNA damage and promotes its E3 SUMO-protein ligase activity. Activates CREB1 and ATF1 transcription factors by phosphorylation in response to genotoxic stress. In response to DNA damage, stabilizes PML by phosphorylation. PML, HIPK2 and FBXO3 may act synergically to activate p53/TP53-dependent transactivation. Promotes angiogenesis, and is involved in erythroid differentiation, especially during fetal liver erythropoiesis. Phosphorylation of RUNX1 and EP300 stimulates EP300 transcription regulation activity. Triggers ZBTB4 protein degradation in response to DNA damage. In response to DNA damage, phosphorylates DAZAP2 which localizes DAZAP2 to the nucleus, reduces interaction of DAZAP2 with HIPK2 and prevents DAZAP2-dependent ubiquitination of HIPK2 by E3 ubiquitin-protein ligase SIAH1 and subsequent proteasomal degradation. Modulates HMGA1 DNA-binding affinity. In response to high glucose, triggers phosphorylation-mediated subnuclear localization shifting of PDX1. Involved in the regulation of eye size, lens formation and retinal lamination during late embryogenesis. This Mus musculus (Mouse) protein is Homeodomain-interacting protein kinase 2 (Hipk2).